A 566-amino-acid chain; its full sequence is Serine/threonine-protein kinase PknE (566 aa).

At 1 to 337 (MDGTAESREG…PLPRSARQPW (337 aa)) the chain is on the cytoplasmic side. Ser7 carries the post-translational modification Phosphoserine; by autocatalysis. Thr11 is modified (phosphothreonine; by autocatalysis). The Protein kinase domain maps to 16 to 275 (YRLRRLVGRG…DLSAAAHAAL (260 aa)). ATP contacts are provided by residues 22–30 (VGRGGMGDV) and Lys45. Thr50 and Thr59 each carry phosphothreonine; by autocatalysis. Catalysis depends on Asp139, which acts as the Proton acceptor. Residues Thr170, Thr175, and Thr178 each carry the phosphothreonine; by autocatalysis modification. The segment at 296-330 (PVPSTHPVSPGTRWPQPTPWAGGAPPWGPPSSPLP) is disordered. The helical transmembrane segment at 338–358 (LWVGVAVAVVVALAGGLGIAL) threads the bilayer. The Extracellular segment spans residues 359 to 566 (AHPWRSSGPR…DPSWLARLIG (208 aa)).

The protein belongs to the protein kinase superfamily. Ser/Thr protein kinase family. Homodimer. In terms of processing, autophosphorylated on serine and threonine residues. Dephosphorylated by PstP.

Its subcellular location is the cell membrane. The catalysed reaction is L-seryl-[protein] + ATP = O-phospho-L-seryl-[protein] + ADP + H(+). The enzyme catalyses L-threonyl-[protein] + ATP = O-phospho-L-threonyl-[protein] + ADP + H(+). Functionally, a serine/threonine-protein kinase, acts on HupB in vitro, modifying at least 2 Ser and 8 Thr residues. Important for bacterial survival in the host during infection. The protein is Serine/threonine-protein kinase PknE of Mycobacterium tuberculosis (strain ATCC 25177 / H37Ra).